We begin with the raw amino-acid sequence, 546 residues long: CTP synthase (546 aa).

Positions 1–266 are amidoligase domain; sequence MTTNYIFVTG…DDLVCTRFGI (266 aa). A CTP-binding site is contributed by S14. S14 is a binding site for UTP. Residues 15–20 and D72 each bind ATP; that span reads SLGKGI. Mg(2+) contacts are provided by D72 and E140. CTP-binding positions include 147-149, 187-192, and K223; these read DIE and KTKPTQ. UTP is bound by residues 187 to 192 and K223; that span reads KTKPTQ. 239–241 is a binding site for ATP; the sequence is KDV. A Glutamine amidotransferase type-1 domain is found at 291–542; it reads TIGMVGKYIE…VKAAGQYSRG (252 aa). Position 352 (G352) interacts with L-glutamine. Residue C379 is the Nucleophile; for glutamine hydrolysis of the active site. Residues 380–383, E403, and R470 each bind L-glutamine; that span reads LGMQ. Catalysis depends on residues H515 and E517.

It belongs to the CTP synthase family. As to quaternary structure, homotetramer.

It catalyses the reaction UTP + L-glutamine + ATP + H2O = CTP + L-glutamate + ADP + phosphate + 2 H(+). The enzyme catalyses L-glutamine + H2O = L-glutamate + NH4(+). The catalysed reaction is UTP + NH4(+) + ATP = CTP + ADP + phosphate + 2 H(+). The protein operates within pyrimidine metabolism; CTP biosynthesis via de novo pathway; CTP from UDP: step 2/2. With respect to regulation, allosterically activated by GTP, when glutamine is the substrate; GTP has no effect on the reaction when ammonia is the substrate. The allosteric effector GTP functions by stabilizing the protein conformation that binds the tetrahedral intermediate(s) formed during glutamine hydrolysis. Inhibited by the product CTP, via allosteric rather than competitive inhibition. Catalyzes the ATP-dependent amination of UTP to CTP with either L-glutamine or ammonia as the source of nitrogen. Regulates intracellular CTP levels through interactions with the four ribonucleotide triphosphates. The sequence is that of CTP synthase from Vibrio parahaemolyticus serotype O3:K6 (strain RIMD 2210633).